The following is a 423-amino-acid chain: Putative competence-damage inducible protein (423 aa).

The protein belongs to the CinA family.

In Streptococcus thermophilus (strain ATCC BAA-491 / LMD-9), this protein is Putative competence-damage inducible protein.